Here is a 33-residue protein sequence, read N- to C-terminus: MSDIN-like toxin proprotein 2 (33 aa).

Residues 1–10 (MSDINATRLP) constitute a propeptide that is removed on maturation. The segment at residues 11–18 (IILAPIIP) is a cross-link (cyclopeptide (Ile-Pro)). A propeptide spanning residues 19 to 33 (CINDDVNSTLTSGER) is cleaved from the precursor.

It belongs to the MSDIN fungal toxin family. Post-translationally, processed by the macrocyclase-peptidase enzyme POPB to yield a toxic cyclic octapeptide. POPB first removes 10 residues from the N-terminus. Conformational trapping of the remaining peptide forces the enzyme to release this intermediate rather than proceed to macrocyclization. The enzyme rebinds the remaining peptide in a different conformation and catalyzes macrocyclization of the N-terminal 8 residues.

In terms of biological role, probable toxin that belongs to the MSDIN-like toxin family responsible for a large number of food poisoning cases and deaths. In Amanita phalloides (Death cap), this protein is MSDIN-like toxin proprotein 2.